Reading from the N-terminus, the 343-residue chain is KRR1 small subunit processome component homolog (343 aa).

The 69-residue stretch at 126–194 folds into the KH domain; it reads DIIKIGNLVH…VRDIVLETMN (69 aa). Residues 230-246 show a composition bias toward basic residues; that stretch reads KNKNISKRKQPKNKKPK. The tract at residues 230–343 is disordered; that stretch reads KNKNISKRKQ…LMKANKKNRS (114 aa). Composition is skewed to basic and acidic residues over residues 272 to 303 and 318 to 331; these read LNKE…RNKD and RPAE…DALK. Positions 272 to 341 form a coiled coil; the sequence is LNKEQKQAKK…AKLMKANKKN (70 aa). The span at 333–343 shows a compositional bias: basic residues; it reads KLMKANKKNRS.

It belongs to the KRR1 family. As to quaternary structure, monomer. Component of the ribosomal small subunit (SSU) processome.

Its subcellular location is the nucleus. The protein localises to the nucleolus. Required for 40S ribosome biogenesis. Involved in nucleolar processing of pre-18S ribosomal RNA and ribosome assembly. Binds to RNA. Required for female germline development, cell viability during eye development and for survival of dividing cells and epithelial cells during early wing disk development. In Drosophila virilis (Fruit fly), this protein is KRR1 small subunit processome component homolog.